The sequence spans 216 residues: MKSTIFFLFLFCAFTTSYLPSAIADFVLDNEGNPLENGGTYYILSDITAFGGIRAAPTGNERCPLTVVQSRNELDKGIGTIISSPYRIRFIAEGHPLSLKFDSFAVIMLCVGIPTEWSVVEDLPEGPAVKIGENKDAMDGWFRLERVSDDEFNNYKLVFCPQQAEDDKCGDIGISIDHDDGTRRLVVSKNKPLVVQFQKLDKESLAKKNHGLSRSE.

The signal sequence occupies residues 1-24 (MKSTIFFLFLFCAFTTSYLPSAIA). 2 cysteine pairs are disulfide-bonded: Cys-63/Cys-110 and Cys-160/Cys-169. The propeptide occupies 206–216 (AKKNHGLSRSE).

Belongs to the protease inhibitor I3 (leguminous Kunitz-type inhibitor) family.

Functionally, inhibition of trypsin. This Glycine max (Soybean) protein is Trypsin inhibitor A (KTI3).